The sequence spans 230 residues: Orotidine 5'-phosphate decarboxylase (230 aa).

Substrate is bound by residues Asp-11, Lys-34, 61 to 70 (DLKLHDIPNT), Thr-117, Arg-179, Gln-188, Gly-208, and Arg-209. Lys-63 serves as the catalytic Proton donor.

It belongs to the OMP decarboxylase family. Type 1 subfamily. In terms of assembly, homodimer.

It catalyses the reaction orotidine 5'-phosphate + H(+) = UMP + CO2. It participates in pyrimidine metabolism; UMP biosynthesis via de novo pathway; UMP from orotate: step 2/2. In terms of biological role, catalyzes the decarboxylation of orotidine 5'-monophosphate (OMP) to uridine 5'-monophosphate (UMP). In Streptococcus equi subsp. zooepidemicus (strain MGCS10565), this protein is Orotidine 5'-phosphate decarboxylase.